We begin with the raw amino-acid sequence, 849 residues long: Dopamine receptor 2 (849 aa).

At 1–39 the chain is on the extracellular side; that stretch reads MEAGETWNVSLEWPPPSLDLSTITQTPSTIVGSGIPLNY. Asparagine 8 carries an N-linked (GlcNAc...) asparagine glycan. A helical transmembrane segment spans residues 40–60; sequence AGLSLIVIPLITLLGNLLVII. At 61–70 the chain is on the cytoplasmic side; the sequence is SVLRYRALQS. The helical transmembrane segment at 71 to 91 threads the bilayer; that stretch reads AINFLILGLAVADLLVAIIVM. At 92-112 the chain is on the extracellular side; the sequence is PYAVYVYVTNGDWYLGNLMCD. Cysteine 111 and cysteine 190 are joined by a disulfide. A helical membrane pass occupies residues 113–133; that stretch reads IYMASDVCCSTASILLLAVIS. The Cytoplasmic portion of the chain corresponds to 134–155; that stretch reads FDRYRAVSLPIQYSRQSQNVKR. The helical transmembrane segment at 156–176 threads the bilayer; the sequence is VWTLIAVIWLVSLTLASPMVF. At 177 to 203 the chain is on the extracellular side; the sequence is GVNVRPPDANPYECRFYNAEFSILSSM. The required for the interaction with gpa-14 stretch occupies residues 183–849; it reads PDANPYECRF…HHFSNKQAHV (667 aa). A helical membrane pass occupies residues 204 to 224; it reads ISFVIPCFLVLFVYIRIIIAL. Residues 225–759 lie on the Cytoplasmic side of the membrane; that stretch reads KKREKAAKMR…QRKEKRATKT (535 aa). The disordered stretch occupies residues 450–515; sequence RRSSYADDSQ…NNSRTASITN (66 aa). Over residues 457 to 470 the composition is skewed to low complexity; it reads DSQPTSSQTSSGDG. A compositionally biased stretch (basic residues) spans 477-498; it reads GQKRFRNLSRNYSTKHHRKVVK. Over residues 501 to 515 the composition is skewed to polar residues; sequence RGNSRNNSRTASITN. The helical transmembrane segment at 760–780 threads the bilayer; that stretch reads LGVVVGVFLVCWVPFFVINIL. The Extracellular segment spans residues 781–798; the sequence is NAVCILLNKDSCQVGYDL. A helical membrane pass occupies residues 799 to 819; it reads FFYCTWIGYMNSFMNPIIYTI. The Cytoplasmic portion of the chain corresponds to 820–849; that stretch reads FNTEFRRAFKSIIFGRNSTRHHFSNKQAHV.

Belongs to the G-protein coupled receptor 1 family. As to quaternary structure, interacts (via C-terminus) with the G-alpha protein gpa-14; the interaction is direct. Expressed in all dopaminergic neurons. Expressed in neurons around the nerve ring and the posterior side of the body including PDE neurons. In hermaphrodites, expressed in the head and tail ganglia including in the RIA interneuron pair, and in a subset of sublateral interneurons and the PDA neuron in the tail. Expressed in cholinergic SIA neurons. Also expressed in the male tail. In males, expressed in the dorsal spicule protractor, ventral spicule protractor, dorsal spicule retractor and ventral spicule retractor muscles and the sensory post-cloacal sensilla B (PCB) neuron. In males, expressed in the sensory hook neurons HOA.

It localises to the cell membrane. Functionally, G-protein coupled receptor which binds to the neurotransmitter dopamine with high affinity leading to the activation of an associated G-protein and downstream signaling pathways. Couples to G-proteins to inhibit adenylate cyclase (AC) activity and cAMP production. Inhibits synaptic vesicle fusion to negatively regulate the release of dopamine at dopaminergic neuron synapses. Antagonizes octopamine signaling in response to food by promoting the dopamine-mediated suppression of crh-1/CREB1 transcription factor activation in cholinergic SIA neurons. This is most likely in association with the G(o)-alpha G-protein subunit goa-1. In association with the G-alpha protein gpa-14, modulates two types of learning behavior: touch habituation and chemosensory associative conditioning. May act partly via tsp-17 to negatively regulate dopamine reuptake transporter dat-1 activity. Plays a role in behavioral plasticity and regulates the decision-making process when conflicting alternatives are present. Promotes male mating behavior by antagonizing acetylcholine signaling to control the protrusions of copulatory spicules from the tail of males during hermaphrodite vulval location. Modulates unc-7 activity at gap junctions to promote inhibitory neuronal signaling transduction between chemosensory and mechanosensory neurons, and thus ensures spicule insertion attempts are confined to the hermaphrodite vulva during copulation. G-protein coupled receptor which binds to the neurotransmitter dopamine with high affinity leading to the activation of an associated G-protein and downstream signaling pathways. Couples to G-proteins to inhibit adenylate cyclase (AC) activity and cAMP production. This is Dopamine receptor 2 from Caenorhabditis elegans.